The chain runs to 464 residues: Zinc transporter 6-A (464 aa).

Residues 1–33 are Cytoplasmic-facing; sequence MGTIYLFRKTQRSLLGKLAQEFRLVTADRRSWK. The chain crosses the membrane as a helical span at residues 34-54; the sequence is ILLFGAINVVCTAFLLTWCSS. The Extracellular segment spans residues 55-64; sequence TNSMALTAYT. The chain crosses the membrane as a helical span at residues 65 to 85; the sequence is YLTIFDLFSLITSLISYWVTM. Topologically, residues 86–98 are cytoplasmic; that stretch reads KKPSPTYSFGFER. The helical transmembrane segment at 99–119 threads the bilayer; the sequence is FEVLAVFASTVLAQLGALFIL. Residues 120-134 are Extracellular-facing; it reads KESAERFIEQPEIHT. The chain crosses the membrane as a helical span at residues 135-155; sequence GRLLVGTFVALFFNLFTMLSI. Topologically, residues 156 to 200 are cytoplasmic; that stretch reads RNKPFAYVSDAASTSWLQEHVADLSRSLCGIIPGLSSIFLPRMNP. Residues 201–221 traverse the membrane as a helical segment; sequence FVLIDIAGALALCITYMLIEI. Residues 222–223 lie on the Extracellular side of the membrane; sequence NN. The chain crosses the membrane as a helical span at residues 224–244; sequence YFAVDTASAVAIAVMTFGTMY. At 245 to 464 the chain is on the cytoplasmic side; the sequence is PMSVYSGKVL…TPGQFTQFRQ (220 aa).

This sequence belongs to the cation diffusion facilitator (CDF) transporter (TC 2.A.4) family. SLC30A subfamily. As to quaternary structure, heterodimer with SLC30A5; form a functional zinc ion transmembrane transporter.

It is found in the golgi apparatus. The protein localises to the trans-Golgi network membrane. In terms of biological role, has probably no intrinsic transporter activity but together with SLC30A5 forms a functional zinc ion:proton antiporter heterodimer, mediating zinc entry into the lumen of organelles along the secretory pathway. As part of that zinc ion:proton antiporter, contributes to zinc ion homeostasis within the early secretory pathway and regulates the activation and folding of enzymes like alkaline phosphatases and enzymes involved in phosphatidylinositol glycan anchor biosynthesis. This Xenopus laevis (African clawed frog) protein is Zinc transporter 6-A (slc30a6-a).